The following is a 436-amino-acid chain: 3-ketoacyl-CoA thiolase (436 aa).

Residue Cys-99 is the Acyl-thioester intermediate of the active site. Residues His-392 and Cys-422 each act as proton acceptor in the active site.

The protein belongs to the thiolase-like superfamily. Thiolase family. As to quaternary structure, heterotetramer of two alpha chains (FadJ) and two beta chains (FadI).

It is found in the cytoplasm. The enzyme catalyses an acyl-CoA + acetyl-CoA = a 3-oxoacyl-CoA + CoA. It participates in lipid metabolism; fatty acid beta-oxidation. Functionally, catalyzes the final step of fatty acid oxidation in which acetyl-CoA is released and the CoA ester of a fatty acid two carbons shorter is formed. The polypeptide is 3-ketoacyl-CoA thiolase (Photorhabdus laumondii subsp. laumondii (strain DSM 15139 / CIP 105565 / TT01) (Photorhabdus luminescens subsp. laumondii)).